The following is a 367-amino-acid chain: Putative zinc metalloprotease mll0638 (367 aa).

Position 20 (His20) interacts with Zn(2+). The active site involves Glu21. His24 provides a ligand contact to Zn(2+). A run of 3 helical transmembrane segments spans residues 108–130, 291–313, and 343–365; these read ATVV…VLFA, LGFE…LNLL, and MAYR…NDLF. One can recognise a PDZ domain in the interval 121-196; that stretch reads TIVVFSVLFA…ITFVMLRDGK (76 aa).

This sequence belongs to the peptidase M50B family. Requires Zn(2+) as cofactor.

Its subcellular location is the cell inner membrane. The protein is Putative zinc metalloprotease mll0638 of Mesorhizobium japonicum (strain LMG 29417 / CECT 9101 / MAFF 303099) (Mesorhizobium loti (strain MAFF 303099)).